Here is a 195-residue protein sequence, read N- to C-terminus: uncharacterized protein (195 aa).

The tract at residues 143-195 (NKLIETINTNRTNNTDNKSTKSKKQTETKKSLRTNKIVKQPINKSKKNIREEY) is disordered. The span at 148–159 (TINTNRTNNTDN) shows a compositional bias: low complexity.

This is an uncharacterized protein from Acanthamoeba polyphaga (Amoeba).